The primary structure comprises 346 residues: uncharacterized protein (346 aa).

The helical transmembrane segment at 16-36 threads the bilayer; that stretch reads ILGIIICIILIVGFFISFDST.

Its subcellular location is the membrane. This is an uncharacterized protein from Methanocaldococcus jannaschii (strain ATCC 43067 / DSM 2661 / JAL-1 / JCM 10045 / NBRC 100440) (Methanococcus jannaschii).